A 404-amino-acid chain; its full sequence is S-adenosylmethionine synthase (404 aa).

139 to 144 (GKGSTD) contributes to the ATP binding site.

Belongs to the AdoMet synthase 2 family. Mg(2+) is required as a cofactor.

The catalysed reaction is L-methionine + ATP + H2O = S-adenosyl-L-methionine + phosphate + diphosphate. The protein operates within amino-acid biosynthesis; S-adenosyl-L-methionine biosynthesis; S-adenosyl-L-methionine from L-methionine: step 1/1. Its function is as follows. Catalyzes the formation of S-adenosylmethionine from methionine and ATP. The protein is S-adenosylmethionine synthase of Saccharolobus islandicus (strain L.S.2.15 / Lassen #1) (Sulfolobus islandicus).